A 321-amino-acid chain; its full sequence is Nucleus-vacuole junction protein 1 (321 aa).

The first 22 residues, 1–22, serve as a signal peptide directing secretion; sequence MTRPPLVRGIFSLGLSVAVLKG. Residues 73–125 form a TSC13-binding region; the sequence is ELSWRKVFNFISRQSSELDARIYVLILLLSFLLPIAWTVLDGDRETTLEDKDN. Residues 94-114 form a helical membrane-spanning segment; it reads IYVLILLLSFLLPIAWTVLDG. Residues 139–195 are OSH1-binding; sequence KHYNDGERAVLQFGKNRSEPIILSYKDMNVLEGEHEFTSKEEHSNSHLTSKSENALS. Position 156 is a phosphoserine (Ser156). Residues 174–183 are compositionally biased toward basic and acidic residues; the sequence is EFTSKEEHSN. Residues 174 to 194 are disordered; it reads EFTSKEEHSNSHLTSKSENAL. Polar residues predominate over residues 184–194; it reads SHLTSKSENAL. Ser199 is modified (phosphoserine). Residues 210–275 form a disordered region; it reads QLEEDKNEPN…SLKSSTSFPI (66 aa). The segment at 233-321 is VAC8-binding; the sequence is DCSSSSEVES…EQAYSQPFRY (89 aa). Residues 242–262 are compositionally biased toward basic and acidic residues; the sequence is SQSKCRKESTAEPDSLSRDTR. Low complexity predominate over residues 263–272; the sequence is TTSSLKSSTS. Phosphoserine occurs at positions 285 and 298. Residues 299–321 are disordered; the sequence is PTKSSNLDAQVNTEQAYSQPFRY.

Interacts with OSH1, TSC13 and VAC8.

The protein localises to the nucleus outer membrane. Functionally, involved in the formation of nucleus-vacuole (NV) junctions during piecemeal microautophagy of the nucleus (PMN). NV junctions are interorganelle interfaces mediated by NVJ1 in the nuclear envelope and VAC8 on the vacuole membrane. Together, NVJ1 and VAC8 form Velcro-like patches through which teardrop-like portions of the nucleus are pinched off into the vacuolar lumen and degraded by the PMN process. Also acts as an outer-nuclear membrane receptor for OSH1 and TSC13. The sequence is that of Nucleus-vacuole junction protein 1 (NVJ1) from Saccharomyces cerevisiae (strain YJM789) (Baker's yeast).